A 106-amino-acid polypeptide reads, in one-letter code: L-rhamnose mutarotase (106 aa).

Substrate is bound at residue Tyr20. Catalysis depends on His24, which acts as the Proton donor. Residues Tyr43 and 78–79 each bind substrate; that span reads WW.

This sequence belongs to the rhamnose mutarotase family. As to quaternary structure, homodimer.

The protein resides in the cytoplasm. The enzyme catalyses alpha-L-rhamnose = beta-L-rhamnose. Its pathway is carbohydrate metabolism; L-rhamnose metabolism. Involved in the anomeric conversion of L-rhamnose. The sequence is that of L-rhamnose mutarotase from Verminephrobacter eiseniae (strain EF01-2).